Here is a 360-residue protein sequence, read N- to C-terminus: Phospho-N-acetylmuramoyl-pentapeptide-transferase (360 aa).

10 consecutive transmembrane segments (helical) span residues 21-41, 73-93, 94-114, 132-152, 168-188, 199-219, 239-259, 263-283, 288-308, and 338-358; these read YLSFRAIVSILTALGISLWMG, TMGGVMILAAITITVLLWADL, TNPYVWAVLAVLLGYGAVGFV, WKYFWQSAIALVVAFALYAHG, VMPQLGLMYIVLTYFVIVGTS, GLAIMPTVLVAAGFAAIAWAT, LVVVCTAMVGAGLGFLWFNTY, VFMGDVGALALGGALGTIAVL, FVLVIMGGVFVMETLSVILQV, and VIVRFWIISIVLVLIGLATLK.

It belongs to the glycosyltransferase 4 family. MraY subfamily. Requires Mg(2+) as cofactor.

It is found in the cell inner membrane. The enzyme catalyses UDP-N-acetyl-alpha-D-muramoyl-L-alanyl-gamma-D-glutamyl-meso-2,6-diaminopimeloyl-D-alanyl-D-alanine + di-trans,octa-cis-undecaprenyl phosphate = di-trans,octa-cis-undecaprenyl diphospho-N-acetyl-alpha-D-muramoyl-L-alanyl-D-glutamyl-meso-2,6-diaminopimeloyl-D-alanyl-D-alanine + UMP. It participates in cell wall biogenesis; peptidoglycan biosynthesis. Its function is as follows. Catalyzes the initial step of the lipid cycle reactions in the biosynthesis of the cell wall peptidoglycan: transfers peptidoglycan precursor phospho-MurNAc-pentapeptide from UDP-MurNAc-pentapeptide onto the lipid carrier undecaprenyl phosphate, yielding undecaprenyl-pyrophosphoryl-MurNAc-pentapeptide, known as lipid I. This Vibrio cholerae serotype O1 (strain M66-2) protein is Phospho-N-acetylmuramoyl-pentapeptide-transferase.